The following is a 650-amino-acid chain: Putative lipase atg15 (650 aa).

Topologically, residues 1-11 are cytoplasmic; the sequence is MKSSRKRTKRR. Residues 12–32 traverse the membrane as a helical; Signal-anchor for type II membrane protein segment; sequence VLQDMSISGLLLSVALLPSVV. Over 33–650 the chain is Lumenal; sequence SAQDHVYLDP…CVGSTGTELR (618 aa). Asparagine 165, asparagine 200, asparagine 222, asparagine 280, and asparagine 304 each carry an N-linked (GlcNAc...) asparagine glycan. The active-site Charge relay system is the serine 320. Asparagine 466 carries an N-linked (GlcNAc...) asparagine glycan.

Belongs to the AB hydrolase superfamily. Lipase family. Binds to both phosphatidylinositol (PI) and phosphatidylinositol 3,5-bisphosphate (PIP2).

It localises to the endosome. The protein resides in the multivesicular body membrane. The protein localises to the prevacuolar compartment membrane. It catalyses the reaction a triacylglycerol + H2O = a diacylglycerol + a fatty acid + H(+). In terms of biological role, lipase which is essential for lysis of subvacuolar cytoplasm to vacuole targeted bodies and intravacuolar autophagic bodies. Involved in the lysis of intravacuolar multivesicular body (MVB) vesicles. The intravacuolar membrane disintegration by atg15 is critical to life span extension. In Aspergillus fumigatus (strain ATCC MYA-4609 / CBS 101355 / FGSC A1100 / Af293) (Neosartorya fumigata), this protein is Putative lipase atg15 (atg15).